Consider the following 139-residue polypeptide: Large ribosomal subunit protein bL17 (139 aa).

This sequence belongs to the bacterial ribosomal protein bL17 family. Part of the 50S ribosomal subunit. Contacts protein L32.

This is Large ribosomal subunit protein bL17 from Cereibacter sphaeroides (strain ATCC 17025 / ATH 2.4.3) (Rhodobacter sphaeroides).